Here is a 352-residue protein sequence, read N- to C-terminus: tRNA N6-adenosine threonylcarbamoyltransferase (352 aa).

Fe cation-binding residues include His115 and His119. Substrate contacts are provided by residues 137-141 (LVSGG), Asp170, Gly183, and Asn281. Position 309 (Asp309) interacts with Fe cation.

Belongs to the KAE1 / TsaD family. Fe(2+) serves as cofactor.

It is found in the cytoplasm. It catalyses the reaction L-threonylcarbamoyladenylate + adenosine(37) in tRNA = N(6)-L-threonylcarbamoyladenosine(37) in tRNA + AMP + H(+). In terms of biological role, required for the formation of a threonylcarbamoyl group on adenosine at position 37 (t(6)A37) in tRNAs that read codons beginning with adenine. Is involved in the transfer of the threonylcarbamoyl moiety of threonylcarbamoyl-AMP (TC-AMP) to the N6 group of A37, together with TsaE and TsaB. TsaD likely plays a direct catalytic role in this reaction. The protein is tRNA N6-adenosine threonylcarbamoyltransferase of Methylocapsa acidiphila.